We begin with the raw amino-acid sequence, 78 residues long: Small ribosomal subunit protein bS18 (78 aa).

Belongs to the bacterial ribosomal protein bS18 family. Part of the 30S ribosomal subunit. Forms a tight heterodimer with protein bS6.

Its function is as follows. Binds as a heterodimer with protein bS6 to the central domain of the 16S rRNA, where it helps stabilize the platform of the 30S subunit. In Rhodospirillum rubrum (strain ATCC 11170 / ATH 1.1.1 / DSM 467 / LMG 4362 / NCIMB 8255 / S1), this protein is Small ribosomal subunit protein bS18.